Consider the following 351-residue polypeptide: Fe(3+) ions import ATP-binding protein FbpC (351 aa).

Residues 7 to 237 form the ABC transporter domain; it reads VVLKNICKRF…PKSMFMANFM (231 aa). 39–46 provides a ligand contact to ATP; the sequence is GPSGCGKT.

It belongs to the ABC transporter superfamily. Fe(3+) ion importer (TC 3.A.1.10) family. The complex is composed of two ATP-binding proteins (FbpC), two transmembrane proteins (FbpB) and a solute-binding protein (FbpA).

The protein localises to the cell inner membrane. It catalyses the reaction Fe(3+)(out) + ATP + H2O = Fe(3+)(in) + ADP + phosphate + H(+). Its function is as follows. Part of the ABC transporter complex FbpABC involved in Fe(3+) ions import. Responsible for energy coupling to the transport system. The polypeptide is Fe(3+) ions import ATP-binding protein FbpC (Vibrio cholerae serotype O1 (strain ATCC 39315 / El Tor Inaba N16961)).